Here is a 1066-residue protein sequence, read N- to C-terminus: DNA-directed RNA polymerase subunit beta (1066 aa).

The protein belongs to the RNA polymerase beta chain family. In plastids the minimal PEP RNA polymerase catalytic core is composed of four subunits: alpha, beta, beta', and beta''. When a (nuclear-encoded) sigma factor is associated with the core the holoenzyme is formed, which can initiate transcription.

It is found in the plastid. The protein resides in the chloroplast. It catalyses the reaction RNA(n) + a ribonucleoside 5'-triphosphate = RNA(n+1) + diphosphate. Functionally, DNA-dependent RNA polymerase catalyzes the transcription of DNA into RNA using the four ribonucleoside triphosphates as substrates. The polypeptide is DNA-directed RNA polymerase subunit beta (Coffea arabica (Arabian coffee)).